The primary structure comprises 528 residues: 2-isopropylmalate synthase (528 aa).

The Pyruvate carboxyltransferase domain maps to 12-279; sequence IRIFDTTLRD…DSSINTPRIV (268 aa). Residues aspartate 21, histidine 214, histidine 216, and asparagine 250 each coordinate Mn(2+). The segment at 401 to 528 is regulatory domain; it reads RLASMTISDV…STDVPTPATA (128 aa).

Belongs to the alpha-IPM synthase/homocitrate synthase family. LeuA type 1 subfamily. As to quaternary structure, homodimer. Requires Mn(2+) as cofactor.

It is found in the cytoplasm. It catalyses the reaction 3-methyl-2-oxobutanoate + acetyl-CoA + H2O = (2S)-2-isopropylmalate + CoA + H(+). Its pathway is amino-acid biosynthesis; L-leucine biosynthesis; L-leucine from 3-methyl-2-oxobutanoate: step 1/4. In terms of biological role, catalyzes the condensation of the acetyl group of acetyl-CoA with 3-methyl-2-oxobutanoate (2-ketoisovalerate) to form 3-carboxy-3-hydroxy-4-methylpentanoate (2-isopropylmalate). This chain is 2-isopropylmalate synthase, found in Stenotrophomonas maltophilia (strain K279a).